The chain runs to 124 residues: uncharacterized protein (124 aa).

Residues 44–92 form a disordered region; it reads DRVENSGNGTGSISAPLTDLGPSIGDSHENKGADIPIHPPLDTQSHAKD. Residues 48–58 are compositionally biased toward polar residues; sequence NSGNGTGSISA.

This is an uncharacterized protein from Caenorhabditis elegans.